We begin with the raw amino-acid sequence, 71 residues long: Conotoxin Vc6.12 (71 aa).

Residues 1 to 19 form the signal peptide; that stretch reads MQKLIILLLVAAVLMSTQA. A propeptide spanning residues 20–43 is cleaved from the precursor; the sequence is LFQEKRPMKKINFLSKGKTDAEKQ. 3 cysteine pairs are disulfide-bonded: C48-C62, C55-C66, and C61-C70.

This sequence belongs to the conotoxin O2 superfamily. In terms of tissue distribution, expressed by the venom duct.

It localises to the secreted. In terms of biological role, inhibits voltage-gated ion channels. In Conus victoriae (Queen Victoria cone), this protein is Conotoxin Vc6.12.